Here is a 185-residue protein sequence, read N- to C-terminus: Peptidyl-tRNA hydrolase (185 aa).

Residue Tyr14 participates in tRNA binding. His19 (proton acceptor) is an active-site residue. Residues Tyr65, Asn67, and Asn113 each coordinate tRNA.

It belongs to the PTH family. In terms of assembly, monomer.

The protein resides in the cytoplasm. It carries out the reaction an N-acyl-L-alpha-aminoacyl-tRNA + H2O = an N-acyl-L-amino acid + a tRNA + H(+). In terms of biological role, hydrolyzes ribosome-free peptidyl-tRNAs (with 1 or more amino acids incorporated), which drop off the ribosome during protein synthesis, or as a result of ribosome stalling. Catalyzes the release of premature peptidyl moieties from peptidyl-tRNA molecules trapped in stalled 50S ribosomal subunits, and thus maintains levels of free tRNAs and 50S ribosomes. The protein is Peptidyl-tRNA hydrolase of Rickettsia bellii (strain RML369-C).